Consider the following 198-residue polypeptide: WYSGMFAPNIKQEPISHHHHHHHAHHSHHQHPHDSNSNSNASSPHQSPLPSPNPPSNTILQLEQYLKQQQQQQQQQQQQQQQQPMDTLCAAAMTPSPSNNDQNSPLMPPGLPNPMQSIMPANLRPCPTATTTTTPAAAAPTTTAATIVLQANDKLQALTPPMDVTPPKSPAKSQQSCAEPEKEHDLMSNSSEDMKYMA.

Disordered regions lie at residues 16–116 (SHHH…NPMQ) and 158–198 (LTPP…KYMA). Basic residues predominate over residues 17–31 (HHHHHHHAHHSHHQH). 2 stretches are compositionally biased toward low complexity: residues 35 to 46 (SNSNSNASSPHQ) and 68 to 83 (QQQQ…QQQQ). Over residues 95–105 (PSPSNNDQNSP) the composition is skewed to polar residues. A compositionally biased stretch (basic and acidic residues) spans 179–198 (EPEKEHDLMSNSSEDMKYMA).

It belongs to the hunchback C2H2-type zinc-finger protein family.

It is found in the nucleus. In terms of biological role, gap class segmentation protein that controls development of head structures. The sequence is that of Protein hunchback (hb) from Drosophila cyrtoloma (Fruit fly).